The primary structure comprises 397 residues: Alpha-lytic protease (397 aa).

The first 24 residues, 1–24 (MYVSNHRSRRVARVSVSCLVAALA), serve as a signal peptide directing secretion. A propeptide spanning residues 25-199 (AMSCGAALAA…ESSPGKLQTT (175 aa)) is cleaved from the precursor. C216 and C236 are oxidised to a cystine. Catalysis depends on charge relay system residues H235 and D262. 2 disulfides stabilise this stretch: C300–C310 and C336–C369. S342 (charge relay system) is an active-site residue.

The protein belongs to the peptidase S1 family.

The catalysed reaction is Preferential cleavage: Ala-|-Xaa, Val-|-Xaa in bacterial cell walls, elastin and other proteins.. The chain is Alpha-lytic protease (alpha-LP) from Lysobacter enzymogenes.